A 257-amino-acid chain; its full sequence is MSDLKKAAQQAISLMDLTTLNDDDTDQKVIELCHKAKTPAGDTAAICIYPRFIPIARKTLNEIGGDDIKIATVTNFPHGNDDIAIAVLETRAAVAYGADEVDVVFPYRALMEGNETVGFELVKACKEACGEDTILKVIIESGVLADPALIRKASELSIDAGADFIKTSTGKVAVNATLEAAEIMMTVISEKNPKVGFKPAGGVKDAAAAAEFLGVAARLLGDDWATPATFRFGASSLLTNLLHTLELADAPQGAQGY.

The Proton donor/acceptor role is filled by Asp102. Residue Lys166 is the Schiff-base intermediate with acetaldehyde of the active site. Lys198 functions as the Proton donor/acceptor in the catalytic mechanism.

This sequence belongs to the DeoC/FbaB aldolase family. DeoC type 2 subfamily.

The protein resides in the cytoplasm. The catalysed reaction is 2-deoxy-D-ribose 5-phosphate = D-glyceraldehyde 3-phosphate + acetaldehyde. Its pathway is carbohydrate degradation; 2-deoxy-D-ribose 1-phosphate degradation; D-glyceraldehyde 3-phosphate and acetaldehyde from 2-deoxy-alpha-D-ribose 1-phosphate: step 2/2. Catalyzes a reversible aldol reaction between acetaldehyde and D-glyceraldehyde 3-phosphate to generate 2-deoxy-D-ribose 5-phosphate. This is Deoxyribose-phosphate aldolase from Shewanella halifaxensis (strain HAW-EB4).